A 425-amino-acid chain; its full sequence is uncharacterized protein (425 aa).

Residues 55-181 (RYAHSLGVYE…DLDTDRMDYL (127 aa)) form the HD domain.

This is an uncharacterized protein from Mycoplasma genitalium (strain ATCC 33530 / DSM 19775 / NCTC 10195 / G37) (Mycoplasmoides genitalium).